Reading from the N-terminus, the 243-residue chain is Small ribosomal subunit protein uS3 (243 aa).

One can recognise a KH type-2 domain in the interval Ile-38 to Lys-106. Residues Thr-217–Arg-243 are disordered.

It belongs to the universal ribosomal protein uS3 family. Part of the 30S ribosomal subunit. Forms a tight complex with proteins S10 and S14.

Binds the lower part of the 30S subunit head. Binds mRNA in the 70S ribosome, positioning it for translation. The sequence is that of Small ribosomal subunit protein uS3 from Phocaeicola vulgatus (strain ATCC 8482 / DSM 1447 / JCM 5826 / CCUG 4940 / NBRC 14291 / NCTC 11154) (Bacteroides vulgatus).